The sequence spans 328 residues: D-cysteine desulfhydrase (328 aa).

K51 carries the post-translational modification N6-(pyridoxal phosphate)lysine.

The protein belongs to the ACC deaminase/D-cysteine desulfhydrase family. As to quaternary structure, homodimer. It depends on pyridoxal 5'-phosphate as a cofactor.

It catalyses the reaction D-cysteine + H2O = hydrogen sulfide + pyruvate + NH4(+) + H(+). Its function is as follows. Catalyzes the alpha,beta-elimination reaction of D-cysteine and of several D-cysteine derivatives. It could be a defense mechanism against D-cysteine. In Salmonella paratyphi B (strain ATCC BAA-1250 / SPB7), this protein is D-cysteine desulfhydrase.